A 620-amino-acid polypeptide reads, in one-letter code: KIF-binding protein (620 aa).

Coiled-coil stretches lie at residues 30–64 and 133–169; these read YKSK…QDIL and LIKS…QLQN.

It belongs to the KIF-binding protein family.

Its subcellular location is the cytoplasm. It is found in the cytoskeleton. Functionally, activator of KIF1B plus-end-directed microtubule motor activity. Required for organization of axonal microtubules, and axonal outgrowth and maintenance during peripheral and central nervous system development. This Dictyostelium discoideum (Social amoeba) protein is KIF-binding protein (kifbp).